Reading from the N-terminus, the 328-residue chain is GTPase Obg 2 (328 aa).

An Obg domain is found at 1–139 (MSFRREKFIE…HCVLLKLKIV (139 aa)). Positions 140 to 309 (SDVGIIGMPN…LHAQVKKAVV (170 aa)) constitute an OBG-type G domain. GTP is bound by residues 146 to 153 (GMPNAGKS), 171 to 175 (FTTLE), 192 to 195 (DIPG), 259 to 262 (NKCD), and 290 to 292 (GDE). Mg(2+)-binding residues include S153 and T173.

Belongs to the TRAFAC class OBG-HflX-like GTPase superfamily. OBG GTPase family. Monomer. Mg(2+) serves as cofactor.

The protein resides in the cytoplasm. In terms of biological role, an essential GTPase which binds GTP, GDP and possibly (p)ppGpp with moderate affinity, with high nucleotide exchange rates and a fairly low GTP hydrolysis rate. Plays a role in control of the cell cycle, stress response, ribosome biogenesis and in those bacteria that undergo differentiation, in morphogenesis control. In Anaplasma marginale (strain Florida), this protein is GTPase Obg 2.